We begin with the raw amino-acid sequence, 192 residues long: Transmembrane protein 276 (192 aa).

The first 32 residues, 1–32, serve as a signal peptide directing secretion; it reads MAPKPGAEWSTALSHLVLGVVSLHAAVSTAEA. 4 helical membrane-spanning segments follow: residues 35-55, 63-83, 89-109, and 114-134; these read GAAA…APGL, AGAW…FHWV, SANL…HLGP, and VAGQ…AVFT.

Its subcellular location is the membrane. The protein is Transmembrane protein 276 of Homo sapiens (Human).